Reading from the N-terminus, the 219-residue chain is Ribose-5-phosphate isomerase A (219 aa).

Substrate contacts are provided by residues 28-31 (TGST), 81-84 (DGAD), and 94-97 (KGGG). E103 functions as the Proton acceptor in the catalytic mechanism. Position 121 (K121) interacts with substrate.

This sequence belongs to the ribose 5-phosphate isomerase family. Homodimer.

It carries out the reaction aldehydo-D-ribose 5-phosphate = D-ribulose 5-phosphate. Its pathway is carbohydrate degradation; pentose phosphate pathway; D-ribose 5-phosphate from D-ribulose 5-phosphate (non-oxidative stage): step 1/1. In terms of biological role, catalyzes the reversible conversion of ribose-5-phosphate to ribulose 5-phosphate. This Shewanella pealeana (strain ATCC 700345 / ANG-SQ1) protein is Ribose-5-phosphate isomerase A.